Consider the following 481-residue polypeptide: 3-isopropylmalate dehydratase large subunit (481 aa).

Cys357, Cys417, and Cys420 together coordinate [4Fe-4S] cluster. Positions 429 to 441 (SPGQRCASTSNRN) are enriched in polar residues. The disordered stretch occupies residues 429–451 (SPGQRCASTSNRNFEGRQGKGGR).

It belongs to the aconitase/IPM isomerase family. LeuC type 1 subfamily. As to quaternary structure, heterodimer of LeuC and LeuD. The cofactor is [4Fe-4S] cluster.

The enzyme catalyses (2R,3S)-3-isopropylmalate = (2S)-2-isopropylmalate. Its pathway is amino-acid biosynthesis; L-leucine biosynthesis; L-leucine from 3-methyl-2-oxobutanoate: step 2/4. Functionally, catalyzes the isomerization between 2-isopropylmalate and 3-isopropylmalate, via the formation of 2-isopropylmaleate. This is 3-isopropylmalate dehydratase large subunit from Mycobacterium sp. (strain KMS).